We begin with the raw amino-acid sequence, 60 residues long: Bowman-Birk type proteinase inhibitor C1 (60 aa).

4 cysteine pairs are disulfide-bonded: cysteine 5–cysteine 21, cysteine 11–cysteine 19, cysteine 28–cysteine 35, and cysteine 32–cysteine 49.

Belongs to the Bowman-Birk serine protease inhibitor family. Expressed in bulb (at protein level).

Its function is as follows. Serine protease inhibitor. Strongly inhibits trypsin (Ki = 0.22 nM) and very weakly inhibits chymotrypsin (Ki = 1200 nM). Does not inhibit bacterial subtilisin. The sequence is that of Bowman-Birk type proteinase inhibitor C1 from Hyacinthus orientalis (Common hyacinth).